A 1071-amino-acid chain; its full sequence is DNA-directed RNA polymerase subunit beta (1071 aa).

The protein belongs to the RNA polymerase beta chain family. In plastids the minimal PEP RNA polymerase catalytic core is composed of four subunits: alpha, beta, beta', and beta''. When a (nuclear-encoded) sigma factor is associated with the core the holoenzyme is formed, which can initiate transcription.

Its subcellular location is the plastid. It localises to the chloroplast. It carries out the reaction RNA(n) + a ribonucleoside 5'-triphosphate = RNA(n+1) + diphosphate. DNA-dependent RNA polymerase catalyzes the transcription of DNA into RNA using the four ribonucleoside triphosphates as substrates. This Anthoceros angustus (Hornwort) protein is DNA-directed RNA polymerase subunit beta.